We begin with the raw amino-acid sequence, 1028 residues long: Contactin-6 (1028 aa).

A signal peptide spans 1 to 19; that stretch reads MRLLWKLVILLPLINSSAG. Ig-like C2-type domains lie at 26 to 117, 122 to 208, 227 to 308, 318 to 402, 408 to 495, and 499 to 587; these read PIFT…AKLQ, EDFE…RSVQ, PKIE…RNLA, PEWE…AELR, PDFS…GSLI, and RTVI…ESLS. 6 cysteine pairs are disulfide-bonded: C50/C100, C144/C196, C249/C297, C339/C386, C431/C479, and C521/C577. 2 N-linked (GlcNAc...) asparagine glycosylation sites follow: N65 and N193. N368, N377, and N468 each carry an N-linked (GlcNAc...) asparagine glycan. 4 consecutive Fibronectin type-III domains span residues 600–698, 703–800, 805–901, and 902–996; these read PPED…TKAS, APVN…SGED, APRG…TKKS, and PPSQ…KMSS. N659, N765, N860, and N865 each carry an N-linked (GlcNAc...) asparagine glycan. At Y882 the chain carries Phosphotyrosine. Over residues 887–902 the composition is skewed to polar residues; sequence TGPSSPPVNVTTKKSP. A disordered region spans residues 887 to 908; sequence TGPSSPPVNVTTKKSPPSQPPA. Residues N895, N931, N956, and N957 are each glycosylated (N-linked (GlcNAc...) asparagine). S999 carries the GPI-anchor amidated serine lipid modification. Residues 1000–1028 constitute a propeptide, removed in mature form; it reads RGIQFLEPSTHFLSIVIVIFHCFAIQPLI.

It belongs to the immunoglobulin superfamily. Contactin family. In terms of assembly, interacts with PTPRG. Expressed in nervous system. Highly expressed in cerebellum. Expressed at intermediate level in thalamus, subthalamic nucleus. Weakly expressed in corpus callosum, caudate nucleus and spinal cord.

Its subcellular location is the cell membrane. Contactins mediate cell surface interactions during nervous system development. Participates in oligodendrocytes generation by acting as a ligand of NOTCH1. Its association with NOTCH1 promotes NOTCH1 activation through the released notch intracellular domain (NICD) and subsequent translocation to the nucleus. Involved in motor coordination. This is Contactin-6 (CNTN6) from Homo sapiens (Human).